A 341-amino-acid chain; its full sequence is Putative casein kinase I C03C10.2 (341 aa).

The region spanning Trp50–Leu326 is the Protein kinase domain. Residues Ile56 to Ile64 and Lys79 contribute to the ATP site. Asp173 (proton acceptor) is an active-site residue.

This sequence belongs to the protein kinase superfamily. CK1 Ser/Thr protein kinase family. Casein kinase I subfamily.

The enzyme catalyses L-seryl-[protein] + ATP = O-phospho-L-seryl-[protein] + ADP + H(+). The catalysed reaction is L-threonyl-[protein] + ATP = O-phospho-L-threonyl-[protein] + ADP + H(+). The protein is Putative casein kinase I C03C10.2 of Caenorhabditis elegans.